Here is a 182-residue protein sequence, read N- to C-terminus: Molybdopterin synthase catalytic subunit (182 aa).

Substrate contacts are provided by residues 119–120, K135, and 142–144; these read HR and KRE. Residues 152 to 182 are disordered; sequence VWRANRDGAPGQRIDTAEPAVGAGSGGEIDD.

Belongs to the MoaE family. MOCS2B subfamily. As to quaternary structure, heterotetramer; composed of 2 small (MOCS2A) and 2 large (MOCS2B) subunits.

It localises to the cytoplasm. It catalyses the reaction 2 [molybdopterin-synthase sulfur-carrier protein]-C-terminal-Gly-aminoethanethioate + cyclic pyranopterin phosphate + H2O = molybdopterin + 2 [molybdopterin-synthase sulfur-carrier protein]-C-terminal Gly-Gly + 2 H(+). Its pathway is cofactor biosynthesis; molybdopterin biosynthesis. In terms of biological role, catalytic subunit of the molybdopterin synthase complex, a complex that catalyzes the conversion of precursor Z into molybdopterin. Acts by mediating the incorporation of 2 sulfur atoms from thiocarboxylated MOCS2A into precursor Z to generate a dithiolene group. The protein is Molybdopterin synthase catalytic subunit of Pyricularia oryzae (strain 70-15 / ATCC MYA-4617 / FGSC 8958) (Rice blast fungus).